The following is a 188-amino-acid chain: MMDKRLVKISKTLSMLLRHHPEKLGLVLDQYGRTDWKTLVRRFNAHYQMHLDRQVLQAIMAQSTKKRFALEGTTIRAVYGHSVPVMPLTPATEPPQWLYHGTSHQAATVIAKEGLLPMNRDFVHLSEDVATARQVGARHDTHPVIYRIAARDAAKNGILFYPTSSRVWLVSELPARFLHHLTSYFRRP.

Belongs to the KptA/TPT1 family.

Its function is as follows. Removes the 2'-phosphate from RNA via an intermediate in which the phosphate is ADP-ribosylated by NAD followed by a presumed transesterification to release the RNA and generate ADP-ribose 1''-2''-cyclic phosphate (APPR&gt;P). May function as an ADP-ribosylase. This is Probable RNA 2'-phosphotransferase from Lacticaseibacillus paracasei (strain ATCC 334 / BCRC 17002 / CCUG 31169 / CIP 107868 / KCTC 3260 / NRRL B-441) (Lactobacillus paracasei).